We begin with the raw amino-acid sequence, 596 residues long: Succinate dehydrogenase flavoprotein subunit (596 aa).

FAD contacts are provided by residues 18-23 (GAGGAG), 41-56 (SKLFPTRSHTVAAQGG), and D225. H49 carries the tele-8alpha-FAD histidine modification. Substrate is bound by residues H246 and T258. R290 (proton acceptor) is an active-site residue. A substrate-binding site is contributed by H357. E391 provides a ligand contact to FAD. Residue R402 coordinates substrate. Position 407 to 408 (407 to 408 (SL)) interacts with FAD.

It belongs to the FAD-dependent oxidoreductase 2 family. FRD/SDH subfamily. In terms of assembly, part of an enzyme complex containing four subunits: a flavoprotein, an iron-sulfur, cytochrome b-556, and a hydrophobic anchor protein. It depends on FAD as a cofactor.

The protein localises to the cell inner membrane. It catalyses the reaction a quinone + succinate = fumarate + a quinol. Its pathway is carbohydrate metabolism; tricarboxylic acid cycle; fumarate from succinate (bacterial route): step 1/1. The chain is Succinate dehydrogenase flavoprotein subunit (sdhA) from Rickettsia bellii (strain RML369-C).